The chain runs to 93 residues: Small ribosomal subunit protein uS19 (93 aa).

Belongs to the universal ribosomal protein uS19 family.

Protein S19 forms a complex with S13 that binds strongly to the 16S ribosomal RNA. The protein is Small ribosomal subunit protein uS19 of Salinispora tropica (strain ATCC BAA-916 / DSM 44818 / JCM 13857 / NBRC 105044 / CNB-440).